A 760-amino-acid polypeptide reads, in one-letter code: General transcription and DNA repair factor IIH helicase subunit XPD (760 aa).

The Helicase ATP-binding domain maps to 7–283 (GLLVYFPYDY…KETDEQRLRD (277 aa)). 42-49 (MPSGTGKT) contacts ATP. [4Fe-4S] cluster contacts are provided by Cys116, Cys134, Cys155, and Cys190. The short motif at 234–237 (DEAH) is the DEAH box element. A mediates interaction with MMS19 region spans residues 438–637 (MDASLAIKPV…TQSRILKARL (200 aa)). The Nuclear localization signal signature appears at 682–695 (KRFARGDKRGKLPR).

This sequence belongs to the helicase family. RAD3/XPD subfamily. As to quaternary structure, component of the 7-subunit TFIIH core complex composed of XPB/ERCC3, XPD/ERCC2, GTF2H1, GTF2H2, GTF2H3, GTF2H4 and GTF2H5, which is active in NER. The core complex associates with the 3-subunit CDK-activating kinase (CAK) module composed of CCNH/cyclin H, CDK7 and MNAT1 to form the 10-subunit holoenzyme (holo-TFIIH) active in transcription. Interacts with GTF2H2 (p44) which stimulates the 5'-3' helicase activity of this subunit. Component of the MMXD complex, which includes CIAO1, ERCC2, CIAO2B, MMS19 and SLC25A5. Interacts with CIAO1 and CIAO2B; the interaction WITH CIAO2B is direct. Interacts with ATF7IP. Interacts directly with MMS19. Part of TBP-based Pol II pre-initiation complex (PIC), in which Pol II core assembles with general transcription factors and other specific initiation factors including GTF2E1, GTF2E2, GTF2F1, GTF2F2, TCEA1, ERCC2, ERCC3, GTF2H2, GTF2H3, GTF2H4, GTF2H5, GTF2A1, GTF2A2, GTF2B and TBP; this large multi-subunit PIC complex mediates DNA unwinding and targets Pol II core to the transcription start site where the first phosphodiester bond forms. In terms of assembly, (Microbial infection) Interacts with Epstein-Barr virus EBNA2. It depends on Mg(2+) as a cofactor. [4Fe-4S] cluster serves as cofactor. Post-translationally, ISGylated.

The protein resides in the nucleus. The protein localises to the cytoplasm. It is found in the cytoskeleton. Its subcellular location is the spindle. The enzyme catalyses Couples ATP hydrolysis with the unwinding of duplex DNA at the replication fork by translocating in the 5'-3' direction. This creates two antiparallel DNA single strands (ssDNA). The leading ssDNA polymer is the template for DNA polymerase III holoenzyme which synthesizes a continuous strand.. It carries out the reaction ATP + H2O = ADP + phosphate + H(+). Interaction with GTF2H2 (p44) results in stimulation of the 5'-3' helicase activity of this subunit. DNA unwinding by this subunit in TFIIH is stimulated 4-fold by XPA and 20-fold by ERCC5/XPG. In terms of biological role, ATP-dependent 5'-3' DNA helicase. Component of the general transcription and DNA repair factor IIH (TFIIH) core complex, not absolutely essential for minimal transcription in vitro. Required for transcription-coupled nucleotide excision repair (NER) of damaged DNA; recognizes damaged bases. Sequestered in chromatin on UV-damaged DNA. When complexed to CDK-activating kinase (CAK), involved in transcription by RNA polymerase II. In NER, TFIIH acts by opening DNA around the lesion to allow the excision of the damaged oligonucleotide and its replacement by a new DNA fragment. The ATP-dependent helicase activity of XPD/ERCC2 is required for DNA opening. Involved in DNA lesion verification. In transcription, TFIIH has an essential role in transcription initiation. When the pre-initiation complex (PIC) has been established, TFIIH is required for promoter opening and promoter escape. Phosphorylation of the C-terminal tail (CTD) of the largest subunit of RNA polymerase II by the kinase module CAK controls the initiation of transcription. XPD/ERCC2 acts by forming a bridge between CAK and the core-TFIIH complex. The structure of the TFIIH transcription complex differs from the NER-TFIIH complex; large movements by XPD/ERCC2 and XPB/ERCC3 are stabilized by XPA which allow this subunit to contact ssDNA. Involved in the regulation of vitamin-D receptor activity. As part of the mitotic spindle-associated MMXD complex it plays a role in chromosome segregation. Might have a role in aging process and could play a causative role in the generation of skin cancers. The protein is General transcription and DNA repair factor IIH helicase subunit XPD (ERCC2) of Homo sapiens (Human).